The following is a 396-amino-acid chain: 1-deoxy-D-xylulose 5-phosphate reductoisomerase (396 aa).

Positions 10, 11, 12, 13, and 123 each coordinate NADPH. Residue Lys-124 coordinates 1-deoxy-D-xylulose 5-phosphate. Glu-125 is an NADPH binding site. Mn(2+) is bound at residue Asp-149. 1-deoxy-D-xylulose 5-phosphate is bound by residues Ser-150, Glu-151, Ser-185, and His-208. Glu-151 serves as a coordination point for Mn(2+). Gly-214 contacts NADPH. Positions 221, 226, 227, and 230 each coordinate 1-deoxy-D-xylulose 5-phosphate. Glu-230 contributes to the Mn(2+) binding site.

Belongs to the DXR family. Mg(2+) serves as cofactor. The cofactor is Mn(2+).

The enzyme catalyses 2-C-methyl-D-erythritol 4-phosphate + NADP(+) = 1-deoxy-D-xylulose 5-phosphate + NADPH + H(+). It functions in the pathway isoprenoid biosynthesis; isopentenyl diphosphate biosynthesis via DXP pathway; isopentenyl diphosphate from 1-deoxy-D-xylulose 5-phosphate: step 1/6. Functionally, catalyzes the NADPH-dependent rearrangement and reduction of 1-deoxy-D-xylulose-5-phosphate (DXP) to 2-C-methyl-D-erythritol 4-phosphate (MEP). The protein is 1-deoxy-D-xylulose 5-phosphate reductoisomerase of Shewanella frigidimarina (strain NCIMB 400).